A 630-amino-acid polypeptide reads, in one-letter code: 1-deoxy-D-xylulose-5-phosphate synthase (630 aa).

Residues histidine 75 and 116-118 (GHS) each bind thiamine diphosphate. Aspartate 147 is a binding site for Mg(2+). Residues 148–149 (GA), asparagine 176, tyrosine 287, and glutamate 367 contribute to the thiamine diphosphate site. Asparagine 176 is a binding site for Mg(2+).

Belongs to the transketolase family. DXPS subfamily. In terms of assembly, homodimer. Requires Mg(2+) as cofactor. Thiamine diphosphate is required as a cofactor.

The enzyme catalyses D-glyceraldehyde 3-phosphate + pyruvate + H(+) = 1-deoxy-D-xylulose 5-phosphate + CO2. The protein operates within metabolic intermediate biosynthesis; 1-deoxy-D-xylulose 5-phosphate biosynthesis; 1-deoxy-D-xylulose 5-phosphate from D-glyceraldehyde 3-phosphate and pyruvate: step 1/1. Functionally, catalyzes the acyloin condensation reaction between C atoms 2 and 3 of pyruvate and glyceraldehyde 3-phosphate to yield 1-deoxy-D-xylulose-5-phosphate (DXP). This chain is 1-deoxy-D-xylulose-5-phosphate synthase, found in Treponema pallidum (strain Nichols).